Consider the following 486-residue polypeptide: Glutamyl-tRNA(Gln) amidotransferase subunit A (486 aa).

Active-site charge relay system residues include Lys-77 and Ser-152. Ser-176 acts as the Acyl-ester intermediate in catalysis.

It belongs to the amidase family. GatA subfamily. As to quaternary structure, heterotrimer of A, B and C subunits.

The enzyme catalyses L-glutamyl-tRNA(Gln) + L-glutamine + ATP + H2O = L-glutaminyl-tRNA(Gln) + L-glutamate + ADP + phosphate + H(+). Functionally, allows the formation of correctly charged Gln-tRNA(Gln) through the transamidation of misacylated Glu-tRNA(Gln) in organisms which lack glutaminyl-tRNA synthetase. The reaction takes place in the presence of glutamine and ATP through an activated gamma-phospho-Glu-tRNA(Gln). The sequence is that of Glutamyl-tRNA(Gln) amidotransferase subunit A from Lactococcus lactis subsp. cremoris (strain SK11).